Reading from the N-terminus, the 397-residue chain is Subtilisin-like protease 12 (397 aa).

The first 19 residues, 1-19 (MSIFKMMLIYFAILWVVNA), serve as a signal peptide directing secretion. Positions 20 to 116 (AQLLDIDPQG…VEPNKEMQVA (97 aa)) are excised as a propeptide. The region spanning 35 to 115 (YIVVMKDRVS…FVEPNKEMQV (81 aa)) is the Inhibitor I9 domain. N-linked (GlcNAc...) asparagine glycans are attached at residues Asn123, Asn136, and Asn150. Residues 125-397 (TWGLSRISHK…NKLLYNGSGA (273 aa)) form the Peptidase S8 domain. Active-site charge relay system residues include Asp157 and His188. N-linked (GlcNAc...) asparagine glycosylation is found at Asn249, Asn305, and Asn334. The active-site Charge relay system is the Ser343. Asn385 and Asn393 each carry an N-linked (GlcNAc...) asparagine glycan.

The protein belongs to the peptidase S8 family.

The protein localises to the secreted. In terms of biological role, secreted subtilisin-like serine protease with keratinolytic activity that contributes to pathogenicity. This chain is Subtilisin-like protease 12 (SUB12), found in Trichophyton verrucosum (strain HKI 0517).